The sequence spans 535 residues: Dimethylaniline monooxygenase [N-oxide-forming] 2 (535 aa).

Ala-2 is subject to N-acetylalanine. FAD is bound by residues 9 to 13 (GAGVS), Glu-32, 40 to 41 (LW), and 61 to 62 (NT). Residues 60–61 (TN) and 195–198 (SASD) each bind NADP(+). Lys-492 is covalently cross-linked (Glycyl lysine isopeptide (Lys-Gly) (interchain with G-Cter in SUMO)). Residues 510-530 (LSASFLMKILALVAVFVAFFS) form a helical membrane-spanning segment.

It belongs to the FMO family. Requires FAD as cofactor. Mg(2+) is required as a cofactor. In terms of tissue distribution, lung.

The protein localises to the microsome membrane. Its subcellular location is the endoplasmic reticulum membrane. In terms of biological role, catalyzes the oxidative metabolism of numerous xenobiotics, including mainly therapeutic drugs and insecticides that contain a soft nucleophile, most commonly nitrogen and sulfur and participates to their bioactivation. This is Dimethylaniline monooxygenase [N-oxide-forming] 2 from Cavia porcellus (Guinea pig).